The sequence spans 134 residues: Small ribosomal subunit protein uS9 (134 aa).

The segment at 109-134 is disordered; it reads DARRTEPHKPSKSSKGPRAKRQKSYR. Residues 118 to 134 are compositionally biased toward basic residues; sequence PSKSSKGPRAKRQKSYR.

The protein belongs to the universal ribosomal protein uS9 family.

This is Small ribosomal subunit protein uS9 from Methanococcus maripaludis (strain C5 / ATCC BAA-1333).